The sequence spans 554 residues: Alpha-taxilin (554 aa).

The interval 1–66 (MKNQDKKNGP…ARAKAAQPGA (66 aa)) is disordered. Ser71 carries the post-translational modification Phosphoserine. The disordered stretch occupies residues 85 to 166 (YCVDNNQGGP…RRPQEKKKAK (82 aa)). A compositionally biased stretch (low complexity) spans 91 to 103 (QGGPAEEGAQGEP). Positions 143 to 158 (EEIRASDEVGDRDHRR) are enriched in basic and acidic residues. Residues 186–491 (EEKLAALCKK…NKRVQDLTAG (306 aa)) adopt a coiled-coil conformation. The interval 492–554 (GITDIGSERR…GPGEPTPATA (63 aa)) is disordered. Phosphoserine occurs at positions 515 and 523.

The protein belongs to the taxilin family. In terms of assembly, binds to the C-terminal coiled coil region of syntaxin family members STX1A, STX3A and STX4A, but not when these proteins are complexed with SNAP25, VAMP2 or STXBP1, suggesting that it interacts with syntaxins that do not form the SNARE complex.

May be involved in intracellular vesicle traffic and potentially in calcium-dependent exocytosis in neuroendocrine cells. The polypeptide is Alpha-taxilin (Txlna) (Mus musculus (Mouse)).